The following is a 341-amino-acid chain: MSDAFKPLLAKLADGQTLDDSDAELFFAACLRGEPTPAQVAAAVTAIRLRGETVGEIAACARAMRRAAIPLEHPYDVIDVCGTGGDGLHTLNISTAVGFVAAGGGLKVAKHGNRAITSKSGTADVLTALGVNIDATREQQRKALDEAGICFLFAQAHHGAMKHVSPIRQQLGFRTIFNLLGPLTNPAGAKRQVVGVSAPRFVEPIAKALGALGAERAWSVHGSGMDELTTTGETEVAEWRDGVVRLFKITPEAVGLPRAALADLTGGDPAFNAAALTRLFDGETGPYRDIVLLNAAAAFLVADKVETLVEGVALAAEAIDSGRAKAALAGLVAATNTEVPA.

5-phospho-alpha-D-ribose 1-diphosphate is bound by residues G82, 85-86 (GD), T90, 92-95 (NIST), 110-118 (KHGNRAITS), and T122. Position 82 (G82) interacts with anthranilate. Residue S94 coordinates Mg(2+). N113 serves as a coordination point for anthranilate. R168 is an anthranilate binding site. Residues D226 and E227 each coordinate Mg(2+).

The protein belongs to the anthranilate phosphoribosyltransferase family. In terms of assembly, homodimer. Requires Mg(2+) as cofactor.

The catalysed reaction is N-(5-phospho-beta-D-ribosyl)anthranilate + diphosphate = 5-phospho-alpha-D-ribose 1-diphosphate + anthranilate. The protein operates within amino-acid biosynthesis; L-tryptophan biosynthesis; L-tryptophan from chorismate: step 2/5. In terms of biological role, catalyzes the transfer of the phosphoribosyl group of 5-phosphorylribose-1-pyrophosphate (PRPP) to anthranilate to yield N-(5'-phosphoribosyl)-anthranilate (PRA). This Caulobacter vibrioides (strain ATCC 19089 / CIP 103742 / CB 15) (Caulobacter crescentus) protein is Anthranilate phosphoribosyltransferase.